Consider the following 405-residue polypeptide: Arginine biosynthesis bifunctional protein ArgJ (405 aa).

Residues Thr152, Lys178, Thr189, Glu276, Asn400, and Thr405 each contribute to the substrate site. Thr189 acts as the Nucleophile in catalysis.

It belongs to the ArgJ family. As to quaternary structure, heterotetramer of two alpha and two beta chains.

It localises to the cytoplasm. The catalysed reaction is N(2)-acetyl-L-ornithine + L-glutamate = N-acetyl-L-glutamate + L-ornithine. It carries out the reaction L-glutamate + acetyl-CoA = N-acetyl-L-glutamate + CoA + H(+). It participates in amino-acid biosynthesis; L-arginine biosynthesis; L-ornithine and N-acetyl-L-glutamate from L-glutamate and N(2)-acetyl-L-ornithine (cyclic): step 1/1. It functions in the pathway amino-acid biosynthesis; L-arginine biosynthesis; N(2)-acetyl-L-ornithine from L-glutamate: step 1/4. Its function is as follows. Catalyzes two activities which are involved in the cyclic version of arginine biosynthesis: the synthesis of N-acetylglutamate from glutamate and acetyl-CoA as the acetyl donor, and of ornithine by transacetylation between N(2)-acetylornithine and glutamate. In Pseudomonas fluorescens (strain ATCC BAA-477 / NRRL B-23932 / Pf-5), this protein is Arginine biosynthesis bifunctional protein ArgJ.